Reading from the N-terminus, the 378-residue chain is Forkhead box protein F1 (378 aa).

Residues 1-45 form a disordered region; sequence MSAPDKQQPPHGGGTGGGGGAGGQAMDPAAAGPTKAKKTNAGVRR. Residues 11-23 are compositionally biased toward gly residues; it reads HGGGTGGGGGAGG. Residues 24 to 42 show a composition bias toward low complexity; the sequence is QAMDPAAAGPTKAKKTNAG. The segment at residues 47–138 is a DNA-binding region (fork-head); the sequence is EKPPYSYIAL…EFMFEEGSFR (92 aa).

Expressed primarily in lung in alveolar type II pneumocyte cells, and to a lesser extent in placenta, stomach, intestine and colon.

It is found in the nucleus. Probable transcription activator for a number of lung-specific genes. This Mus musculus (Mouse) protein is Forkhead box protein F1 (Foxf1).